The chain runs to 52 residues: Teratocyte protein CftICK-I (52 aa).

The signal sequence occupies residues 1-19 (MYKLCILFLVVIFAVMAIA). 3 disulfide bridges follow: C22–C37, C29–C41, and C36–C51.

As to expression, abundantly expressed by teratocytes, which are extra-embryonic cells released by parasitoid wasps into their hosts during larval eclosion.

The protein resides in the secreted. In terms of biological role, this endoparasitoid wasp peptide has immununosuppressive, antimicrobial and insecticidal activities. Suppress cellular immunity which is detectable as a reduction of hemocyte encapsulation in the host. Shows potent antifungal activity against C.albicans (MIC~0.25 ug/ml). In vivo, ingestion of this peptide (probably at excessive doses) increases larval mortality and reduces leaf consumption of D.saccharalis, a permissive host for C.flavipes. In Cotesia flavipes (Parasitic wasp), this protein is Teratocyte protein CftICK-I.